We begin with the raw amino-acid sequence, 313 residues long: Formimidoylglutamase (313 aa).

Positions 130, 155, 157, 159, 241, and 243 each coordinate Mn(2+).

It belongs to the arginase family. The cofactor is Mn(2+).

It catalyses the reaction N-formimidoyl-L-glutamate + H2O = formamide + L-glutamate. Its pathway is amino-acid degradation; L-histidine degradation into L-glutamate; L-glutamate from N-formimidoyl-L-glutamate (hydrolase route): step 1/1. Its function is as follows. Catalyzes the conversion of N-formimidoyl-L-glutamate to L-glutamate and formamide. This chain is Formimidoylglutamase, found in Salmonella agona (strain SL483).